Reading from the N-terminus, the 483-residue chain is Proline--tRNA ligase (483 aa).

The protein belongs to the class-II aminoacyl-tRNA synthetase family. ProS type 3 subfamily. As to quaternary structure, homodimer.

It localises to the cytoplasm. It catalyses the reaction tRNA(Pro) + L-proline + ATP = L-prolyl-tRNA(Pro) + AMP + diphosphate. In terms of biological role, catalyzes the attachment of proline to tRNA(Pro) in a two-step reaction: proline is first activated by ATP to form Pro-AMP and then transferred to the acceptor end of tRNA(Pro). The protein is Proline--tRNA ligase of Sulfurisphaera tokodaii (strain DSM 16993 / JCM 10545 / NBRC 100140 / 7) (Sulfolobus tokodaii).